A 397-amino-acid polypeptide reads, in one-letter code: Subtilisin-like serine protease Pen c 1 (397 aa).

A signal peptide spans 1 to 19 (MGFLKVLATSLATLAVVDA). Residues 20-115 (GTLLTASNTD…IEPDMIVNAT (96 aa)) constitute a propeptide, removed in mature form. An Inhibitor I9 domain is found at 35-113 (SYIVVMNDDV…KYIEPDMIVN (79 aa)). Residues 125 to 397 (SWGLARISSK…SKLLYNGINV (273 aa)) form the Peptidase S8 domain. Active-site charge relay system residues include Asp157, His188, and Ser343.

Belongs to the peptidase S8 family.

The protein resides in the secreted. Inhibited by 0.1 mM diisopropyl fluorophosphate (DFP), phenylmethanesulfonyl fluoride (PMSF), chymostatin and elastatinal. Not inhibited by N-alpha-p-tosyl-L-lysine chloromethylketone (TLCK), N-tosyl-L-phenylalanyl chloromethyl ketone (TPCK) or N-carbobenzoxy-L-phenylalanine chloromethylketone (ZPCK). Serine protease. Hydrolyzes azocasein. Cleaves peptide bonds of the oxidized insulin B chain preferably at 15-Leu-|-Tyr-16, but also at 4-Gln-|-His-5 and 24-Phe-|-Phe-25, and to a lesser extent at 5-His-|-Leu-6 and 25-Phe-|-Tyr-26. Hydrolyzes amide bonds between amino acids and 7-amino-4-methylcoumarin (AMC) in vitro. The protein is Subtilisin-like serine protease Pen c 1 of Penicillium citrinum.